The primary structure comprises 311 residues: UDP-N-acetylenolpyruvoylglucosamine reductase (311 aa).

The FAD-binding PCMH-type domain occupies Lys28–Gly197. Arg177 is a catalytic residue. Residue Ser226 is the Proton donor of the active site. Residue Glu296 is part of the active site.

Belongs to the MurB family. FAD is required as a cofactor.

Its subcellular location is the cytoplasm. It catalyses the reaction UDP-N-acetyl-alpha-D-muramate + NADP(+) = UDP-N-acetyl-3-O-(1-carboxyvinyl)-alpha-D-glucosamine + NADPH + H(+). The protein operates within cell wall biogenesis; peptidoglycan biosynthesis. In terms of biological role, cell wall formation. This Magnetococcus marinus (strain ATCC BAA-1437 / JCM 17883 / MC-1) protein is UDP-N-acetylenolpyruvoylglucosamine reductase.